The following is a 392-amino-acid chain: S-adenosylmethionine synthase (392 aa).

Mg(2+) is bound at residue E10. H16 contributes to the ATP binding site. E44 serves as a coordination point for K(+). L-methionine is bound by residues E57 and Q100. ATP is bound by residues 168–170, 236–239, D247, 253–254, A270, K274, and K278; these read DGK, SGRF, and RK. D247 is a binding site for L-methionine. K278 is a binding site for L-methionine.

It belongs to the AdoMet synthase family. As to quaternary structure, homotetramer. Mn(2+) is required as a cofactor. The cofactor is Mg(2+). Requires Co(2+) as cofactor. It depends on K(+) as a cofactor.

The protein localises to the cytoplasm. The enzyme catalyses L-methionine + ATP + H2O = S-adenosyl-L-methionine + phosphate + diphosphate. It functions in the pathway amino-acid biosynthesis; S-adenosyl-L-methionine biosynthesis; S-adenosyl-L-methionine from L-methionine: step 1/1. Functionally, catalyzes the formation of S-adenosylmethionine from methionine and ATP. The reaction comprises two steps that are both catalyzed by the same enzyme: formation of S-adenosylmethionine (AdoMet) and triphosphate, and subsequent hydrolysis of the triphosphate. The polypeptide is S-adenosylmethionine synthase (SAMS) (Phaseolus lunatus (Lima bean)).